The following is a 432-amino-acid chain: Phosphomethylpyrimidine synthase (432 aa).

Residues Asn-66, Met-95, Tyr-124, His-163, 185 to 187 (SRG), 226 to 229 (DGLR), and Glu-265 contribute to the substrate site. His-269 contacts Zn(2+). Tyr-292 contributes to the substrate binding site. His-333 serves as a coordination point for Zn(2+). The [4Fe-4S] cluster site is built by Cys-409, Cys-412, and Cys-416.

It belongs to the ThiC family. Requires [4Fe-4S] cluster as cofactor.

The catalysed reaction is 5-amino-1-(5-phospho-beta-D-ribosyl)imidazole + S-adenosyl-L-methionine = 4-amino-2-methyl-5-(phosphooxymethyl)pyrimidine + CO + 5'-deoxyadenosine + formate + L-methionine + 3 H(+). The protein operates within cofactor biosynthesis; thiamine diphosphate biosynthesis. Functionally, catalyzes the synthesis of the hydroxymethylpyrimidine phosphate (HMP-P) moiety of thiamine from aminoimidazole ribotide (AIR) in a radical S-adenosyl-L-methionine (SAM)-dependent reaction. This is Phosphomethylpyrimidine synthase from Thermoanaerobacter sp. (strain X514).